The primary structure comprises 432 residues: Trigger factor (432 aa).

In terms of domain architecture, PPIase FKBP-type spans 161–246; that stretch reads EDRVTIDFTG…LKKVEERELP (86 aa).

The protein belongs to the FKBP-type PPIase family. Tig subfamily. Homodimer and monomer. In vivo most of the ribosomes are in complex with monomeric TF. Uncomplexed TF, however, is in a monomer-dimer equilibrium with approximately two thirds of TF existing in a dimeric state.

Its subcellular location is the cytoplasm. The enzyme catalyses [protein]-peptidylproline (omega=180) = [protein]-peptidylproline (omega=0). Functionally, involved in protein export. Acts as a chaperone by maintaining the newly synthesized protein in an open conformation. Functions as a peptidyl-prolyl cis-trans isomerase. The sequence is that of Trigger factor from Shigella boydii serotype 4 (strain Sb227).